The sequence spans 503 residues: Glutamate--tRNA ligase (503 aa).

The 'HIGH' region signature appears at 9–19 (PSPTGDPHVGT). The 'KMSKS' region motif lies at 251–255 (KLSKR). Lys-254 lines the ATP pocket.

This sequence belongs to the class-I aminoacyl-tRNA synthetase family. Glutamate--tRNA ligase type 1 subfamily. As to quaternary structure, monomer.

It localises to the cytoplasm. The enzyme catalyses tRNA(Glu) + L-glutamate + ATP = L-glutamyl-tRNA(Glu) + AMP + diphosphate. In terms of biological role, catalyzes the attachment of glutamate to tRNA(Glu) in a two-step reaction: glutamate is first activated by ATP to form Glu-AMP and then transferred to the acceptor end of tRNA(Glu). The sequence is that of Glutamate--tRNA ligase from Saccharophagus degradans (strain 2-40 / ATCC 43961 / DSM 17024).